Consider the following 265-residue polypeptide: Lysosomal membrane ascorbate-dependent ferrireductase CYB561A3 (265 aa).

Residues 1–2 (MA) lie on the Cytoplasmic side of the membrane. The chain crosses the membrane as a helical span at residues 3 to 23 (VGWFYLSVLALCSLGSMCILF). The Cytochrome b561 domain maps to 12 to 219 (ALCSLGSMCI…FGLLVLYILL (208 aa)). Over 24-45 (TIYWMRYWHGGFAWDGSMLMFN) the chain is Lumenal. Residues 46–66 (WHPVLMVTGMVVLYSAASLVY) traverse the membrane as a helical segment. Residues His47 and Arg67 each coordinate heme b. Over 67 to 83 (RLPQSWVGPRLPWKSGH) the chain is Cytoplasmic. Arg76 and Lys80 together coordinate L-ascorbate. Residue His83 participates in heme b binding. Residues 84–104 (AAMHLLAFLLTVLGLHAVFEF) form a helical membrane-spanning segment. Residues 105–119 (HNHAKIPHLYSLHSW) are Lumenal-facing. Heme b is bound by residues 112 to 115 (HLYS) and His117. The helical transmembrane segment at 120–140 (LGITTVFLFACQWFLGFSVFL) threads the bilayer. Topologically, residues 141 to 154 (LPWASMWLRSLLKP) are cytoplasmic. L-ascorbate is bound at residue Arg149. Residues 155 to 175 (IHVFFGASILSLAIASVVSGI) form a helical membrane-spanning segment. Positions 156 and 177 each coordinate heme b. At 176–197 (NEKLFFSLKNGTKTYSNLPSEA) the chain is on the lumenal side. Asn185 is a glycosylation site (N-linked (GlcNAc...) asparagine). Residues 198–218 (VFANCAGMLVVVFGLLVLYIL) traverse the membrane as a helical segment. The Cytoplasmic segment spans residues 219-265 (LASSWKRPEPGMQAEREPTRTRGRAGTPEVMLEGERGLAEPLLQKRS). Residue Lys224 participates in heme b binding. Over residues 228-238 (PGMQAEREPTR) the composition is skewed to basic and acidic residues. A disordered region spans residues 228–265 (PGMQAEREPTRTRGRAGTPEVMLEGERGLAEPLLQKRS).

As to quaternary structure, homodimer. The cofactor is heme b. In terms of processing, N-glycosylated.

It is found in the late endosome membrane. Its subcellular location is the lysosome membrane. It carries out the reaction Fe(3+)(out) + L-ascorbate(in) = monodehydro-L-ascorbate radical(in) + Fe(2+)(out) + H(+). In terms of biological role, transmembrane reductase that uses ascorbate as an electron donor in the cytoplasm and transfers electrons across membranes to reduce iron cations Fe(3+) into Fe(2+) in the lumen of the late endosome and lysosome. Reduced iron can then be extruded from the late endosome and lysosome to the cytoplasm by divalent metal-specific transporters. It is therefore most probably involved in endosomal and lysosomal cellular iron homeostasis. The protein is Lysosomal membrane ascorbate-dependent ferrireductase CYB561A3 of Bos taurus (Bovine).